A 98-amino-acid polypeptide reads, in one-letter code: Large ribosomal subunit protein bL28 (98 aa).

The protein belongs to the bacterial ribosomal protein bL28 family.

This chain is Large ribosomal subunit protein bL28, found in Chelativorans sp. (strain BNC1).